A 198-amino-acid chain; its full sequence is MKEFIIKANKAVTNGEINLKDLPGSSGRLDLLCRCVNSAFFLSHDMRRDTIFYSVNYGDPNPPVTLKFVGSELKRVSPDERSIALFIKKALEKDATELWKESTSGIYSSKREFRDIILEKKNEGKRIFYLHLNGKPLEDFEFKDDEDFLFVLGDHIGIGDEDEEFLEEIGAEKISLSPLELHADHCIILVHNILDRLK.

S-adenosyl-L-methionine is bound by residues Leu130, Gly153, 176–181 (LSPLEL), and Cys186.

It belongs to the methyltransferase superfamily. TrmY family. As to quaternary structure, homodimer.

It localises to the cytoplasm. It carries out the reaction pseudouridine(54) in tRNA + S-adenosyl-L-methionine = N(1)-methylpseudouridine(54) in tRNA + S-adenosyl-L-homocysteine + H(+). Functionally, specifically catalyzes the N1-methylation of pseudouridine at position 54 (Psi54) in tRNAs. In Methanococcus maripaludis (strain C7 / ATCC BAA-1331), this protein is tRNA (pseudouridine(54)-N(1))-methyltransferase.